A 246-amino-acid chain; its full sequence is Fasciclin-like arabinogalactan protein 11 (246 aa).

An N-terminal signal peptide occupies residues 1-24; it reads MATSRTFIFSNLFIFFLVIATTYG. The FAS1 domain maps to 34 to 179; that stretch reads PTNITAILEK…LAVYQVDQVL (146 aa). Asparagine 36, asparagine 68, asparagine 141, and asparagine 150 each carry an N-linked (GlcNAc...) asparagine glycan. The interval 193 to 222 is disordered; sequence PAPEKGGSVSKGSASGGDDGGDSTDSSDAE. The GPI-anchor amidated serine moiety is linked to residue serine 219. Residues 220–246 constitute a propeptide, removed in mature form; it reads DAERTGFGFGIRITTVAAIAASSSLWI.

It belongs to the fasciclin-like AGP family. In terms of tissue distribution, expressed in the sclerenchyma cells of inflorescence stems and siliques.

The protein localises to the cell membrane. In terms of biological role, may be a cell surface adhesion protein. This chain is Fasciclin-like arabinogalactan protein 11 (FLA11), found in Arabidopsis thaliana (Mouse-ear cress).